Reading from the N-terminus, the 264-residue chain is Phosphoribosylaminoimidazole-succinocarboxamide synthase 1 (264 aa).

This sequence belongs to the SAICAR synthetase family.

The enzyme catalyses 5-amino-1-(5-phospho-D-ribosyl)imidazole-4-carboxylate + L-aspartate + ATP = (2S)-2-[5-amino-1-(5-phospho-beta-D-ribosyl)imidazole-4-carboxamido]succinate + ADP + phosphate + 2 H(+). It participates in purine metabolism; IMP biosynthesis via de novo pathway; 5-amino-1-(5-phospho-D-ribosyl)imidazole-4-carboxamide from 5-amino-1-(5-phospho-D-ribosyl)imidazole-4-carboxylate: step 1/2. The polypeptide is Phosphoribosylaminoimidazole-succinocarboxamide synthase 1 (purC1) (Mesorhizobium japonicum (strain LMG 29417 / CECT 9101 / MAFF 303099) (Mesorhizobium loti (strain MAFF 303099))).